A 414-amino-acid chain; its full sequence is MGGAARAVLLGFLQASSSFDVRDSTGKVCIIANLTVAFSVEYKSSGQKQFAHFFLPQNATSQSHSSCGEGNTSHPILALSFGAGHLISLNFSKTLDKYQVEELTFHYNLSDETLFPNATEGKVMVATQKSVIQARIGTEYRCINSKYVRMKHVNITFSNVTLEAYPTNDTFSANKTECREDMVSTTTVAPTTPKHATSQVPTTSPAPTAAPSSPAVGKYNVTGANGTCVLASMGLQLNITYVKKDEKMGLDLLNFIPHNTSASGMCESTSAFLNLAFEKTKITFHFVLNASSEKFFLQGVNVSTTLPSEAKAPTFEASNDSMSESRATVGNSYKCSAEENFQVTDKALVNVFNVQVQAFKVDGDKFGAMEECQLDENNMLIPIIVGAALAGLVLIVLIAYLIGRKRSHAGYQTI.

Positions 1-18 (MGGAARAVLLGFLQASSS) are cleaved as a signal peptide. Residues 19 to 181 (FDVRDSTGKV…SANKTECRED (163 aa)) are first lumenal domain. The Lumenal segment spans residues 19–379 (FDVRDSTGKV…EECQLDENNM (361 aa)). Cysteines 29 and 67 form a disulfide. Residues Asn33, Asn58, Asn71, Asn90, Asn108, Asn117, Asn154, Asn159, Asn168, and Asn174 are each glycosylated (N-linked (GlcNAc...) asparagine). Cys142 and Cys178 form a disulfide bridge. The segment at 182–224 (MVSTTTVAPTTPKHATSQVPTTSPAPTAAPSSPAVGKYNVTGA) is hinge. The disordered stretch occupies residues 186–213 (TTVAPTTPKHATSQVPTTSPAPTAAPSS). Residues 196-213 (ATSQVPTTSPAPTAAPSS) show a composition bias toward low complexity. Asn220, Asn225, Asn238, Asn259, Asn289, Asn301, and Asn319 each carry an N-linked (GlcNAc...) asparagine glycan. A second lumenal domain region spans residues 225 to 379 (NGTCVLASMG…EECQLDENNM (155 aa)). Cys228 and Cys266 form a disulfide bridge. Cysteines 335 and 372 form a disulfide. Residues 380-403 (LIPIIVGAALAGLVLIVLIAYLIG) form a helical membrane-spanning segment. Residues 404 to 414 (RKRSHAGYQTI) lie on the Cytoplasmic side of the membrane.

It belongs to the LAMP family.

It localises to the lysosome membrane. The protein localises to the endosome membrane. Its subcellular location is the late endosome membrane. It is found in the cell membrane. The protein resides in the cytolytic granule membrane. Its function is as follows. Lysosomal membrane glycoprotein which plays an important role in lysosome biogenesis, lysosomal pH regulation, autophagy and cholesterol homeostasis. In terms of biological role, (Microbial infection) Plays an essential role in efficient replication and spread of Marek's disease virus, by facilitating viral cell-to-cell spread. The polypeptide is Lysosome-associated membrane glycoprotein 1 (LAMP1) (Gallus gallus (Chicken)).